The chain runs to 375 residues: Chaperone protein DnaJ (375 aa).

The J domain occupies 5-70 (DYYEVLGVER…GKRMAYDQYG (66 aa)). A CR-type zinc finger spans residues 134–212 (GTTVTIRVPT…CHGQGRVEEH (79 aa)). Positions 147, 150, 164, 167, 186, 189, 200, and 203 each coordinate Zn(2+). CXXCXGXG motif repeat units follow at residues 147 to 154 (CKTCDGSG), 164 to 171 (CTTCGGIG), 186 to 193 (CPRCHGSG), and 200 to 207 (CPDCHGQG).

Belongs to the DnaJ family. As to quaternary structure, homodimer. Zn(2+) serves as cofactor.

The protein localises to the cytoplasm. Its function is as follows. Participates actively in the response to hyperosmotic and heat shock by preventing the aggregation of stress-denatured proteins and by disaggregating proteins, also in an autonomous, DnaK-independent fashion. Unfolded proteins bind initially to DnaJ; upon interaction with the DnaJ-bound protein, DnaK hydrolyzes its bound ATP, resulting in the formation of a stable complex. GrpE releases ADP from DnaK; ATP binding to DnaK triggers the release of the substrate protein, thus completing the reaction cycle. Several rounds of ATP-dependent interactions between DnaJ, DnaK and GrpE are required for fully efficient folding. Also involved, together with DnaK and GrpE, in the DNA replication of plasmids through activation of initiation proteins. The chain is Chaperone protein DnaJ from Azotobacter vinelandii (strain DJ / ATCC BAA-1303).